The chain runs to 974 residues: Hexokinase-1 (974 aa).

Residues 1-42 (MGWGAPLLSRMLHGPGQAGETSPVPERQSGSENPASEDRRPL) are disordered. Residues 57–66 (CQRGQAVDVE) are mitochondrial-binding peptide (MBP). 2 Hexokinase domains span residues 72–514 (PLTE…MVTA) and 520–962 (AEQH…LITA). Residues Arg-86 and 140–145 (DLGGSS) contribute to the ATP site. The interval 129–263 (DGSEKGDFIA…DYDANIVAVV (135 aa)) is hexokinase small subdomain 1. 140–147 (DLGGSSFR) provides a ligand contact to D-glucose 6-phosphate. Residues Ser-211, 228–229 (TK), and 264–265 (ND) contribute to the D-glucose site. A hexokinase large subdomain 1 region spans residues 264–503 (NDTVGTMMTC…SDVRFLLSES (240 aa)). Positions 265 and 288 each coordinate D-glucose 6-phosphate. D-glucose contacts are provided by residues Asn-291, Glu-316, and 347–350 (QLFE). A Phosphoserine modification is found at Ser-393. 469-471 (DGS) lines the D-glucose 6-phosphate pocket. 481 to 482 (RR) is a binding site for ATP. Residues Ser-505 and 588-592 (DLGGT) each bind D-glucose 6-phosphate. Residues 577–711 (DGTEHGDFLA…EFDLDVVAVV (135 aa)) form a hexokinase small subdomain 2 region. An ATP-binding site is contributed by 588-593 (DLGGTN). Residues 659–660 (SF), 676–677 (TK), and 712–713 (ND) each bind D-glucose. The hexokinase large subdomain 2 stretch occupies residues 712–951 (NDTVGTMMTC…CTVSFLLSED (240 aa)). Residues Asp-713 and Thr-736 each contribute to the D-glucose 6-phosphate site. Position 736 (Thr-736) interacts with ATP. D-glucose contacts are provided by residues 738 to 739 (SN), Glu-764, and Glu-798. Residues 803 to 804 (GM), 840 to 844 (TKFLS), and 919 to 923 (TLYKL) each bind ATP. D-glucose 6-phosphate-binding positions include 917–919 (DGT) and Ser-953.

It belongs to the hexokinase family. As to quaternary structure, monomer. Interacts with RABL2/RABL2A; binds preferentially to GTP-bound RABL2. Interacts with VDAC1. The HK1-VDAC1 complex interacts with ATF2. Interacts (via N-terminal spermatogenic cell-specific region) with PFKM isoform 2 and isoform 3 (via C-terminus). Interacts with SMAD5. Post-translationally, tyrosine-phosphorylated. As to expression, in rapidly growing tumor cells exhibiting high glucose catabolic rates, isoform HK1 is markedly elevated. Isoform HK1-SA, isoform HK1-SB and isoform HK1-SC are found only in spermatogenic cells. Isoform HK1-SC is detected in round spermatids, condensing spermatids and mature sperm where it is found in the head membranes, mitochondria of the midpiece and the fibrous sheath of the flagellum. Expressed within the principal piece and midpiece of sperm tail (at protein level).

It is found in the mitochondrion outer membrane. The protein localises to the cytoplasm. Its subcellular location is the cytosol. It localises to the membrane. It carries out the reaction a D-hexose + ATP = a D-hexose 6-phosphate + ADP + H(+). The enzyme catalyses D-fructose + ATP = D-fructose 6-phosphate + ADP + H(+). The catalysed reaction is D-glucose + ATP = D-glucose 6-phosphate + ADP + H(+). It catalyses the reaction D-mannose + ATP = D-mannose 6-phosphate + ADP + H(+). It carries out the reaction D-glucosamine + ATP = D-glucosamine 6-phosphate + ADP + H(+). The protein operates within carbohydrate metabolism; hexose metabolism. Its pathway is carbohydrate degradation; glycolysis; D-glyceraldehyde 3-phosphate and glycerone phosphate from D-glucose: step 1/4. Its activity is regulated as follows. Hexokinase is an allosteric enzyme inhibited by its product D-glucose 6-phosphate. Hexokinase activity is inhibited by N-acetyl-D-glucosamine. Catalyzes the phosphorylation of various hexoses, such as D-glucose, D-glucosamine, D-fructose, D-mannose and 2-deoxy-D-glucose, to hexose 6-phosphate (D-glucose 6-phosphate, D-glucosamine 6-phosphate, D-fructose 6-phosphate, D-mannose 6-phosphate and 2-deoxy-D-glucose 6-phosphate, respectively). Does not phosphorylate N-acetyl-D-glucosamine. Mediates the initial step of glycolysis by catalyzing phosphorylation of D-glucose to D-glucose 6-phosphate. Involved in innate immunity and inflammation by acting as a pattern recognition receptor for bacterial peptidoglycan. When released in the cytosol, N-acetyl-D-glucosamine component of bacterial peptidoglycan inhibits the hexokinase activity of HK1 and causes its dissociation from mitochondrial outer membrane, thereby activating the NLRP3 inflammasome. The chain is Hexokinase-1 from Mus musculus (Mouse).